Reading from the N-terminus, the 302-residue chain is Segregation and condensation protein A (302 aa).

This sequence belongs to the ScpA family. In terms of assembly, component of a cohesin-like complex composed of ScpA, ScpB and the Smc homodimer, in which ScpA and ScpB bind to the head domain of Smc. The presence of the three proteins is required for the association of the complex with DNA.

Its subcellular location is the cytoplasm. Functionally, participates in chromosomal partition during cell division. May act via the formation of a condensin-like complex containing Smc and ScpB that pull DNA away from mid-cell into both cell halves. This Xylella fastidiosa (strain Temecula1 / ATCC 700964) protein is Segregation and condensation protein A.